Consider the following 203-residue polypeptide: Small ribosomal subunit protein uS4 (203 aa).

The S4 RNA-binding domain maps to Cys-93 to Asn-154.

Belongs to the universal ribosomal protein uS4 family. As to quaternary structure, part of the 30S ribosomal subunit. Contacts protein S5. The interaction surface between S4 and S5 is involved in control of translational fidelity.

Functionally, one of the primary rRNA binding proteins, it binds directly to 16S rRNA where it nucleates assembly of the body of the 30S subunit. In terms of biological role, with S5 and S12 plays an important role in translational accuracy. This is Small ribosomal subunit protein uS4 from Chloroherpeton thalassium (strain ATCC 35110 / GB-78).